A 756-amino-acid polypeptide reads, in one-letter code: Receptor-like protein 3 (756 aa).

The signal sequence occupies residues methionine 1–alanine 50. Residues leucine 51–isoleucine 88 form an N-cap region. Residues leucine 51–lysine 725 lie on the Extracellular side of the membrane. An N-linked (GlcNAc...) asparagine glycan is attached at asparagine 66. LRR repeat units follow at residues aspartate 95 to leucine 119, histidine 120 to alanine 143, aspartate 145 to asparagine 169, cysteine 174 to glutamine 199, threonine 201 to serine 225, serine 226 to cysteine 250, lysine 252 to leucine 274, serine 275 to leucine 298, threonine 299 to leucine 322, serine 323 to cysteine 346, asparagine 348 to arginine 370, phenylalanine 371 to cysteine 395, serine 397 to leucine 419, glutamate 420 to glutamine 443, cysteine 445 to serine 471, phenylalanine 474 to leucine 498, lysine 499 to threonine 521, and phenylalanine 522 to leucine 546. Residues asparagine 126 and asparagine 169 are each glycosylated (N-linked (GlcNAc...) asparagine). Asparagine 208 carries N-linked (GlcNAc...) asparagine glycosylation. N-linked (GlcNAc...) asparagine glycans are attached at residues asparagine 262 and asparagine 273. N-linked (GlcNAc...) asparagine glycosylation is found at asparagine 334 and asparagine 345. N-linked (GlcNAc...) asparagine glycosylation occurs at asparagine 381. Asparagine 434, asparagine 447, and asparagine 459 each carry an N-linked (GlcNAc...) asparagine glycan. The stretch at alanine 548–valine 569 is one LRR 19; degenerate repeat. 4 LRR repeats span residues serine 570–arginine 593, leucine 608–lysine 631, leucine 632–leucine 656, and tyrosine 658–threonine 681. N-linked (GlcNAc...) asparagine glycosylation occurs at asparagine 573. Residue asparagine 666 is glycosylated (N-linked (GlcNAc...) asparagine). The interval leucine 699–lysine 725 is C-cap/acidic domain. The helical transmembrane segment at phenylalanine 726–phenylalanine 746 threads the bilayer. Topologically, residues phenylalanine 747–lysine 756 are cytoplasmic.

This sequence belongs to the RLP family. As to expression, expressed at very low levels in the shoot apex.

Its subcellular location is the cell membrane. In terms of biological role, involved in the perception of CLV3 and CLV3-like peptides, that act as extracellular signals regulating meristems maintenance. Contributes, with WAKL22/RFO1, to resistance to F.oxysporum (f.) matthioli in cv. Columbia relative to cv. Ty-0. This is Receptor-like protein 3 from Arabidopsis thaliana (Mouse-ear cress).